A 483-amino-acid chain; its full sequence is Dual specificity protein phosphatase CDC14C (483 aa).

The segment at 1-45 (MKRKSEGRSSWAAATCSPCCSLTSPSVKKIRSPTQQDPRHRDPQD) is disordered. The Nucleolar localization signal signature appears at 1 to 53 (MKRKSEGRSSWAAATCSPCCSLTSPSVKKIRSPTQQDPRHRDPQDDVYLDITD). Residues 12 to 26 (AAATCSPCCSLTSPS) are compositionally biased toward low complexity. Residues 43–197 (PQDDVYLDIT…AMQYGFLNFN (155 aa)) are a. Residues 198-211 (SFNLDEYEHYEKAE) are linker. Residues 212 to 378 (NGDLNWIIPD…EGDYFCQKLK (167 aa)) are b. A Tyrosine-protein phosphatase domain is found at 213 to 373 (GDLNWIIPDR…TSLWLEGDYF (161 aa)). Cysteine 313 (phosphocysteine intermediate) is an active-site residue. Positions 407–426 (QDQQEPEPYSDDDEINGGTQ) are disordered. The segment covering 408 to 421 (DQQEPEPYSDDDEI) has biased composition (acidic residues). The chain crosses the membrane as a helical span at residues 444–466 (ILLTCPLAVLTSALCSVVIWWIV).

The protein belongs to the protein-tyrosine phosphatase family. Non-receptor class CDC14 subfamily.

The protein localises to the membrane. It is found in the nucleus. The protein resides in the nucleolus. It localises to the cytoplasm. Its subcellular location is the cytoskeleton. The catalysed reaction is O-phospho-L-tyrosyl-[protein] + H2O = L-tyrosyl-[protein] + phosphate. It catalyses the reaction O-phospho-L-seryl-[protein] + H2O = L-seryl-[protein] + phosphate. It carries out the reaction O-phospho-L-threonyl-[protein] + H2O = L-threonyl-[protein] + phosphate. Functionally, dual-specificity phosphatase. Preferentially dephosphorylates proteins modified by proline-directed kinases. This chain is Dual specificity protein phosphatase CDC14C, found in Symphalangus syndactylus (Siamang).